The chain runs to 518 residues: Arrestin-related trafficking adapter 10 (518 aa).

Lysine 118 participates in a covalent cross-link: Glycyl lysine isopeptide (Lys-Gly) (interchain with G-Cter in ubiquitin).

Belongs to the ART10 family. In terms of assembly, interacts with RSP5. Post-translationally, ubiquitinated by RSP5.

The protein localises to the cytoplasm. May regulate endocytosis by recruiting RSP5 ubiquitin ligase activity to specific plasma membrane proteins in response to extracellular stimuli. This Saccharomyces cerevisiae (strain RM11-1a) (Baker's yeast) protein is Arrestin-related trafficking adapter 10 (ART10).